The following is a 73-amino-acid chain: IGMVVECKDGYLVGNDGCKYSCFTRPGTYCANECSRVKGKDGYCYAWMACYCYSMPNWVKTWDRATNRCGRGK.

Residues 1–7 (IGMVVEC) form the signal peptide. Residues 8-70 (KDGYLVGNDG…TWDRATNRCG (63 aa)) enclose the LCN-type CS-alpha/beta domain. 4 disulfides stabilise this stretch: C18-C69, C22-C44, C30-C50, and C34-C52. An Arginine amide modification is found at R71.

The protein belongs to the long (4 C-C) scorpion toxin superfamily. Sodium channel inhibitor family. Beta subfamily. In terms of tissue distribution, expressed by the venom gland.

It localises to the secreted. Functionally, beta toxins bind voltage-independently at site-4 of sodium channels (Nav) and shift the voltage of activation toward more negative potentials thereby affecting sodium channel activation and promoting spontaneous and repetitive firing. In Tityus discrepans (Venezuelan scorpion), this protein is Toxin Td4.